A 214-amino-acid polypeptide reads, in one-letter code: Cytochrome c biogenesis ATP-binding export protein CcmA (214 aa).

In terms of domain architecture, ABC transporter spans 12 to 214 (LAAHDLAFSR…TRMLTLEVAA (203 aa)). ATP is bound at residue 44 to 51 (GDNGAGKT).

It belongs to the ABC transporter superfamily. CcmA exporter (TC 3.A.1.107) family. The complex is composed of two ATP-binding proteins (CcmA) and two transmembrane proteins (CcmB).

Its subcellular location is the cell inner membrane. The enzyme catalyses heme b(in) + ATP + H2O = heme b(out) + ADP + phosphate + H(+). Functionally, part of the ABC transporter complex CcmAB involved in the biogenesis of c-type cytochromes; once thought to export heme, this seems not to be the case, but its exact role is uncertain. Responsible for energy coupling to the transport system. This Xanthomonas axonopodis pv. citri (strain 306) protein is Cytochrome c biogenesis ATP-binding export protein CcmA.